The primary structure comprises 334 residues: Large ribosomal subunit protein uL3 (334 aa).

Residues 1-10 show a composition bias toward basic residues; sequence MGMKKNRPRR. Residues 1-21 are disordered; the sequence is MGMKKNRPRRGSLAFSPRKRA.

The protein belongs to the universal ribosomal protein uL3 family. Part of the 50S ribosomal subunit. Forms a cluster with proteins L14 and L24e.

In terms of biological role, one of the primary rRNA binding proteins, it binds directly near the 3'-end of the 23S rRNA, where it nucleates assembly of the 50S subunit. This chain is Large ribosomal subunit protein uL3, found in Methanococcus maripaludis (strain DSM 14266 / JCM 13030 / NBRC 101832 / S2 / LL).